The chain runs to 829 residues: Leucine--tRNA ligase (829 aa).

Positions 42–52 match the 'HIGH' region motif; sequence PYPSGRIHMGH. Positions 584-588 match the 'KMSKS' region motif; the sequence is KMSKS. K587 is an ATP binding site.

Belongs to the class-I aminoacyl-tRNA synthetase family.

Its subcellular location is the cytoplasm. It catalyses the reaction tRNA(Leu) + L-leucine + ATP = L-leucyl-tRNA(Leu) + AMP + diphosphate. The chain is Leucine--tRNA ligase from Syntrophobacter fumaroxidans (strain DSM 10017 / MPOB).